The sequence spans 67 residues: Small integral membrane protein 20 (67 aa).

Residues 1 to 6 lie on the Mitochondrial matrix side of the membrane; that stretch reads MSRNLR. Residues 7–27 traverse the membrane as a helical segment; the sequence is TALIFGGFISLIGAAFYPIYF. The Mitochondrial intermembrane segment spans residues 28–67; it reads RPLMRLEEYKKEQAINRAGIVQEDVQPPGLKVWSDPFGRK. Phenylalanine amide is present on Phe-64.

In terms of assembly, component of the MITRAC (mitochondrial translation regulation assembly intermediate of cytochrome c oxidase complex) complex, the core components of this complex being COA3/MITRAC12 and COX14. Interacts with COA3/MITRAC12 and COX4I1. Directly interacts with newly synthesized MT-CO1/COX1. As to expression, expressed in the ovary, specifically in granulosa cells of follicles that have passed the primary stage and in oocytes (at protein level).

It localises to the mitochondrion inner membrane. The protein resides in the secreted. In terms of biological role, component of the MITRAC (mitochondrial translation regulation assembly intermediate of cytochrome c oxidase complex) complex, that regulates cytochrome c oxidase assembly. Promotes the progression of complex assembly after the association of MT-CO1/COX1 with COX4I1 and COX6C. Chaperone-like assembly factor required to stabilize newly synthesized MT-CO1/COX1 and to prevent its premature turnover. Functionally, peptide involved in a broad spectrum of regulatory functions. Is a ligand for GPR173. As part of the reproductive cycle, it regulates gonadotropin-releasing hormone (GnRH) signaling in the hypothalamus and pituitary gland which augments the release of luteinizing hormone. Plays a protective role in memory retention through activation of GNRHR. Regulates the secretion of AVP by hypothalamic neurons. Plays a role in the transduction of the itch sensation. Induces anxiolytic effects, reducing behavior associated with anxiety. Regulates food intake as well as satiation and satiety. In the ovary, it regulates follicular growth by stimulating granulosa cell proliferation by increasing the expression of GPR173, CREB1, CYP19A1, KITLG, FSHR, and LHCGR. It also increases the production of estradiol (E2). In the heart, it regulates contractility and relaxation. It also plays a cardioprotective role during ischemia, where it activates the SAFE and RISK pathways. Stimulates the proliferation and differentiation of preadipocytes. In pancreatic islet cells, it induces proliferation of islet cells as well as the production of INS. The protein is Small integral membrane protein 20 (SMIM20) of Homo sapiens (Human).